A 276-amino-acid chain; its full sequence is Putative E3 ubiquitin-protein ligase SINA-like 9 (276 aa).

The segment at 38–74 adopts an RING-type zinc-finger fold; that stretch reads CPICCEALTSPIFQCDNGHLACGSCCPKLSNKCPACT. Residues 88–274 form an SBD region; it reads VLESILIPCP…MQVFIIENVD (187 aa). An SIAH-type zinc finger spans residues 91-149; that stretch reads SILIPCPNVRFGCTKSFFYGKESAHEKECIFSQCSCPSSVCDYTGSYKDLYAHYKLTHS. Zn(2+) contacts are provided by C96, C103, H115, C119, C126, C131, H143, and H148.

The protein belongs to the SINA (Seven in absentia) family.

The enzyme catalyses S-ubiquitinyl-[E2 ubiquitin-conjugating enzyme]-L-cysteine + [acceptor protein]-L-lysine = [E2 ubiquitin-conjugating enzyme]-L-cysteine + N(6)-ubiquitinyl-[acceptor protein]-L-lysine.. Its pathway is protein modification; protein ubiquitination. E3 ubiquitin-protein ligase that mediates ubiquitination and subsequent proteasomal degradation of target proteins. E3 ubiquitin ligases accept ubiquitin from an E2 ubiquitin-conjugating enzyme in the form of a thioester and then directly transfers the ubiquitin to targeted substrates. It probably triggers the ubiquitin-mediated degradation of different substrates. This chain is Putative E3 ubiquitin-protein ligase SINA-like 9, found in Arabidopsis thaliana (Mouse-ear cress).